Here is a 126-residue protein sequence, read N- to C-terminus: Histone H2B type 1-K (126 aa).

Residues 1–12 (MPEPAKSAPAPK) are compositionally biased toward low complexity. Residues 1 to 36 (MPEPAKSAPAPKKGSKKAVTKAQKKDGKKRKRSRKE) form a disordered region. Pro-2 carries the N-acetylproline modification. At Glu-3 the chain carries ADP-ribosyl glutamic acid. Lys-6 carries the N6-(2-hydroxyisobutyryl)lysine; alternate modification. Lys-6 carries the N6-(beta-hydroxybutyryl)lysine; alternate modification. N6-acetyllysine; alternate is present on Lys-6. Residue Lys-6 is modified to N6-butyryllysine; alternate. An N6-crotonyllysine; alternate modification is found at Lys-6. Lys-6 carries the N6-lactoyllysine; alternate modification. A Glycyl lysine isopeptide (Lys-Gly) (interchain with G-Cter in SUMO2); alternate cross-link involves residue Lys-6. The residue at position 7 (Ser-7) is an ADP-ribosylserine. The residue at position 12 (Lys-12) is an N6-(beta-hydroxybutyryl)lysine; alternate. 2 positions are modified to N6-acetyllysine; alternate: Lys-12 and Lys-13. N6-crotonyllysine; alternate occurs at positions 12 and 13. The residue at position 12 (Lys-12) is an N6-lactoyllysine; alternate. Lys-13 is subject to N6-(2-hydroxyisobutyryl)lysine; alternate. Residue Ser-15 is modified to Phosphoserine; by STK4/MST1. Residues Lys-16, Lys-17, Lys-21, and Lys-24 each carry the N6-acetyllysine; alternate modification. N6-crotonyllysine; alternate is present on residues Lys-16, Lys-17, Lys-21, and Lys-24. An N6-lactoyllysine; alternate mark is found at Lys-16, Lys-17, Lys-21, and Lys-24. Lys-17 carries the N6-glutaryllysine; alternate modification. An N6-(2-hydroxyisobutyryl)lysine; alternate mark is found at Lys-21 and Lys-24. Position 21 is an N6-(beta-hydroxybutyryl)lysine; alternate (Lys-21). Lys-21 bears the N6-butyryllysine; alternate mark. Lys-21 participates in a covalent cross-link: Glycyl lysine isopeptide (Lys-Gly) (interchain with G-Cter in SUMO2); alternate. At Lys-25 the chain carries N6-(2-hydroxyisobutyryl)lysine. Lys-35 carries the post-translational modification N6-(2-hydroxyisobutyryl)lysine; alternate. Position 35 is an N6-(beta-hydroxybutyryl)lysine; alternate (Lys-35). Position 35 is an N6-crotonyllysine; alternate (Lys-35). Residue Lys-35 is modified to N6-glutaryllysine; alternate. The residue at position 35 (Lys-35) is an N6-succinyllysine; alternate. Lys-35 is covalently cross-linked (Glycyl lysine isopeptide (Lys-Gly) (interchain with G-Cter in ubiquitin); alternate). At Glu-36 the chain carries PolyADP-ribosyl glutamic acid. A Phosphoserine; by AMPK modification is found at Ser-37. An N6-(2-hydroxyisobutyryl)lysine; alternate mark is found at Lys-44, Lys-47, and Lys-58. Lys-44 bears the N6-lactoyllysine; alternate mark. Lys-44 and Lys-47 each carry N6-glutaryllysine; alternate. Lys-47 carries the post-translational modification N6-methyllysine; alternate. An N6,N6-dimethyllysine; alternate modification is found at Lys-58. A Dimethylated arginine modification is found at Arg-80. Lys-86 bears the N6-(2-hydroxyisobutyryl)lysine; alternate mark. Residue Lys-86 is modified to N6-acetyllysine; alternate. Lys-86 is modified (N6-lactoyllysine; alternate). The residue at position 86 (Lys-86) is an N6,N6,N6-trimethyllysine; alternate. Residues Arg-87 and Arg-93 each carry the omega-N-methylarginine modification. Lys-109 is modified (N6-(2-hydroxyisobutyryl)lysine; alternate). Position 109 is an N6-lactoyllysine; alternate (Lys-109). Lys-109 bears the N6-glutaryllysine; alternate mark. The residue at position 109 (Lys-109) is an N6-methyllysine; alternate. Ser-113 carries an O-linked (GlcNAc) serine glycan. Residue Thr-116 is modified to Phosphothreonine. N6-(2-hydroxyisobutyryl)lysine; alternate is present on residues Lys-117 and Lys-121. Position 117 is an N6-(beta-hydroxybutyryl)lysine; alternate (Lys-117). Residues Lys-117 and Lys-121 each carry the N6-lactoyllysine; alternate modification. N6-glutaryllysine; alternate is present on residues Lys-117 and Lys-121. N6-succinyllysine; alternate occurs at positions 117 and 121. Lys-117 is modified (N6-methylated lysine; alternate). Lys-121 participates in a covalent cross-link: Glycyl lysine isopeptide (Lys-Gly) (interchain with G-Cter in ubiquitin); alternate.

It belongs to the histone H2B family. In terms of assembly, the nucleosome is a histone octamer containing two molecules each of H2A, H2B, H3 and H4 assembled in one H3-H4 heterotetramer and two H2A-H2B heterodimers. The octamer wraps approximately 147 bp of DNA. Post-translationally, monoubiquitination at Lys-35 (H2BK34Ub) by the MSL1/MSL2 dimer is required for histone H3 'Lys-4' (H3K4me) and 'Lys-79' (H3K79me) methylation and transcription activation at specific gene loci, such as HOXA9 and MEIS1 loci. Similarly, monoubiquitination at Lys-121 (H2BK120Ub) by the RNF20/40 complex gives a specific tag for epigenetic transcriptional activation and is also prerequisite for histone H3 'Lys-4' and 'Lys-79' methylation. It also functions cooperatively with the FACT dimer to stimulate elongation by RNA polymerase II. H2BK120Ub also acts as a regulator of mRNA splicing: deubiquitination by USP49 is required for efficient cotranscriptional splicing of a large set of exons. Phosphorylated on Ser-15 (H2BS14ph) by STK4/MST1 during apoptosis; which facilitates apoptotic chromatin condensation. Also phosphorylated on Ser-15 in response to DNA double strand breaks (DSBs), and in correlation with somatic hypermutation and immunoglobulin class-switch recombination. Phosphorylation at Ser-37 (H2BS36ph) by AMPK in response to stress promotes transcription. In terms of processing, glcNAcylation at Ser-113 promotes monoubiquitination of Lys-121. It fluctuates in response to extracellular glucose, and associates with transcribed genes. Post-translationally, ADP-ribosylated by PARP1 or PARP2 on Ser-7 (H2BS6ADPr) in response to DNA damage. H2BS6ADPr promotes recruitment of CHD1L. Mono-ADP-ribosylated on Glu-3 (H2BE2ADPr) by PARP3 in response to single-strand breaks. Poly ADP-ribosylation on Glu-36 (H2BE35ADPr) by PARP1 regulates adipogenesis: it inhibits phosphorylation at Ser-37 (H2BS36ph), thereby blocking expression of pro-adipogenetic genes. Crotonylation (Kcr) is specifically present in male germ cells and marks testis-specific genes in post-meiotic cells, including X-linked genes that escape sex chromosome inactivation in haploid cells. Crotonylation marks active promoters and enhancers and confers resistance to transcriptional repressors. It is also associated with post-meiotically activated genes on autosomes. In terms of processing, lactylated in macrophages by EP300/P300 by using lactoyl-CoA directly derived from endogenous or exogenous lactate, leading to stimulates gene transcription.

Its subcellular location is the nucleus. It localises to the chromosome. Core component of nucleosome. Nucleosomes wrap and compact DNA into chromatin, limiting DNA accessibility to the cellular machineries which require DNA as a template. Histones thereby play a central role in transcription regulation, DNA repair, DNA replication and chromosomal stability. DNA accessibility is regulated via a complex set of post-translational modifications of histones, also called histone code, and nucleosome remodeling. The sequence is that of Histone H2B type 1-K from Macaca fascicularis (Crab-eating macaque).